Reading from the N-terminus, the 175-residue chain is Bifunctional protein PyrR (175 aa).

The PRPP-binding signature appears at 98-110 (VIIIDDVLYTGRT).

This sequence belongs to the purine/pyrimidine phosphoribosyltransferase family. PyrR subfamily. In terms of assembly, homodimer and homohexamer; in equilibrium.

It carries out the reaction UMP + diphosphate = 5-phospho-alpha-D-ribose 1-diphosphate + uracil. Its function is as follows. Regulates transcriptional attenuation of the pyrimidine nucleotide (pyr) operon by binding in a uridine-dependent manner to specific sites on pyr mRNA. This disrupts an antiterminator hairpin in the RNA and favors formation of a downstream transcription terminator, leading to a reduced expression of downstream genes. In terms of biological role, also displays a weak uracil phosphoribosyltransferase activity which is not physiologically significant. In Staphylococcus aureus (strain bovine RF122 / ET3-1), this protein is Bifunctional protein PyrR.